The sequence spans 503 residues: Aspartyl/glutamyl-tRNA(Asn/Gln) amidotransferase subunit B (503 aa).

The protein belongs to the GatB/GatE family. GatB subfamily. As to quaternary structure, heterotrimer of A, B and C subunits.

It catalyses the reaction L-glutamyl-tRNA(Gln) + L-glutamine + ATP + H2O = L-glutaminyl-tRNA(Gln) + L-glutamate + ADP + phosphate + H(+). The catalysed reaction is L-aspartyl-tRNA(Asn) + L-glutamine + ATP + H2O = L-asparaginyl-tRNA(Asn) + L-glutamate + ADP + phosphate + 2 H(+). Functionally, allows the formation of correctly charged Asn-tRNA(Asn) or Gln-tRNA(Gln) through the transamidation of misacylated Asp-tRNA(Asn) or Glu-tRNA(Gln) in organisms which lack either or both of asparaginyl-tRNA or glutaminyl-tRNA synthetases. The reaction takes place in the presence of glutamine and ATP through an activated phospho-Asp-tRNA(Asn) or phospho-Glu-tRNA(Gln). This Mycobacterium avium (strain 104) protein is Aspartyl/glutamyl-tRNA(Asn/Gln) amidotransferase subunit B.